The following is a 1464-amino-acid chain: DNA-directed RNA polymerase subunit beta' (1464 aa).

Positions 541, 543, and 545 each coordinate Mg(2+). Zn(2+) contacts are provided by Cys1022, Cys1098, Cys1105, and Cys1108. Positions Leu1435–Asp1464 are disordered.

This sequence belongs to the RNA polymerase beta' chain family. As to quaternary structure, the RNAP catalytic core consists of 2 alpha, 1 beta, 1 beta' and 1 omega subunit. When a sigma factor is associated with the core the holoenzyme is formed, which can initiate transcription. Mg(2+) is required as a cofactor. The cofactor is Zn(2+).

The enzyme catalyses RNA(n) + a ribonucleoside 5'-triphosphate = RNA(n+1) + diphosphate. Functionally, DNA-dependent RNA polymerase catalyzes the transcription of DNA into RNA using the four ribonucleoside triphosphates as substrates. This is DNA-directed RNA polymerase subunit beta' from Metamycoplasma arthritidis (strain 158L3-1) (Mycoplasma arthritidis).